We begin with the raw amino-acid sequence, 444 residues long: Phosphoglucosamine mutase (444 aa).

Ser102 (phosphoserine intermediate) is an active-site residue. Residues Ser102, Asp241, Asp243, and Asp245 each coordinate Mg(2+). At Ser102 the chain carries Phosphoserine.

Belongs to the phosphohexose mutase family. It depends on Mg(2+) as a cofactor. In terms of processing, activated by phosphorylation.

It carries out the reaction alpha-D-glucosamine 1-phosphate = D-glucosamine 6-phosphate. Functionally, catalyzes the conversion of glucosamine-6-phosphate to glucosamine-1-phosphate. The polypeptide is Phosphoglucosamine mutase (Histophilus somni (strain 2336) (Haemophilus somnus)).